The sequence spans 184 residues: Cathelicidin-related peptide Pt_CRAMP1 (184 aa).

The first 22 residues, 1 to 22 (MEGFFWKTWLVVAAFAIGGTSS), serve as a signal peptide directing secretion. Positions 23–150 (LPHKPLTYEE…EDEKDQPRRV (128 aa)) are excised as a propeptide. Cystine bridges form between Cys81–Cys92 and Cys103–Cys120. Residues 125–144 (EDEEQNQEEEEEEEKEEDEK) are compositionally biased toward acidic residues. The disordered stretch occupies residues 125–147 (EDEEQNQEEEEEEEKEEDEKDQP).

This sequence belongs to the cathelicidin family. Expressed by the venom gland.

It localises to the secreted. Its subcellular location is the target cell membrane. Potent antimicrobial peptide against Gram-negative (MIC=2 ug/ml against E.coli ATCC 25922, MIC=8 ug/ml against P.aeruginosa) and Gram-positive bacteria (MIC=32 ug/ml against E.faecalis, MIC=32 ug/ml against S.aureus). Adopts an amphipathic alpha helical conformation, that may allow to partition into the target membrane. High hemolytic activities have been observed on mammalian cells. The chain is Cathelicidin-related peptide Pt_CRAMP1 from Pseudonaja textilis (Eastern brown snake).